A 230-amino-acid polypeptide reads, in one-letter code: Flagellar L-ring protein (230 aa).

An N-terminal signal peptide occupies residues 1–21 (MMLKTVLRLPVCAALLALAAG). A lipid anchor (N-palmitoyl cysteine) is attached at Cys-22. Cys-22 carries S-diacylglycerol cysteine lipidation. Residues 34–53 (PLTAPPPPPPQPSARPNGSI) are disordered. The span at 36 to 46 (TAPPPPPPQPS) shows a compositional bias: pro residues.

The protein belongs to the FlgH family. As to quaternary structure, the basal body constitutes a major portion of the flagellar organelle and consists of four rings (L,P,S, and M) mounted on a central rod.

It localises to the cell outer membrane. It is found in the bacterial flagellum basal body. Assembles around the rod to form the L-ring and probably protects the motor/basal body from shearing forces during rotation. This is Flagellar L-ring protein from Bordetella bronchiseptica (strain ATCC BAA-588 / NCTC 13252 / RB50) (Alcaligenes bronchisepticus).